The primary structure comprises 155 residues: RNA pyrophosphohydrolase (155 aa).

Residues 5–149 (EYRSGVGIML…KKPLYEKILS (145 aa)) enclose the Nudix hydrolase domain. The short motif at 39–60 (GGLEAKETPEVGVLRELEEETG) is the Nudix box element.

This sequence belongs to the Nudix hydrolase family. RppH subfamily. The cofactor is a divalent metal cation.

Functionally, accelerates the degradation of transcripts by removing pyrophosphate from the 5'-end of triphosphorylated RNA, leading to a more labile monophosphorylated state that can stimulate subsequent ribonuclease cleavage. This Zymomonas mobilis subsp. mobilis (strain ATCC 31821 / ZM4 / CP4) protein is RNA pyrophosphohydrolase.